Here is a 347-residue protein sequence, read N- to C-terminus: Zinc-type alcohol dehydrogenase-like protein C16A3.02c (347 aa).

It belongs to the zinc-containing alcohol dehydrogenase family. Quinone oxidoreductase subfamily.

The protein resides in the golgi apparatus. It localises to the endoplasmic reticulum. The sequence is that of Zinc-type alcohol dehydrogenase-like protein C16A3.02c from Schizosaccharomyces pombe (strain 972 / ATCC 24843) (Fission yeast).